We begin with the raw amino-acid sequence, 646 residues long: ATP-dependent rRNA helicase SPB4 (646 aa).

Positions 15–43 (WGALTPSLAPWILDYLSSMGFEQPTPVQK) match the Q motif motif. A Helicase ATP-binding domain is found at 46-247 (FDIFRGNKDV…TVGLLYPHKI (202 aa)). An ATP-binding site is contributed by 59-66 (AVTGSGKT). The DEAD box signature appears at 195-198 (DEAD). The region spanning 284-434 (ALCQLLERLE…PLAKPPVSVT (151 aa)) is the Helicase C-terminal domain. 2 stretches are compositionally biased toward basic and acidic residues: residues 539–548 (KKEKAAREAQ) and 566–581 (NEAW…VKAA). Residues 539-646 (KKEKAAREAQ…GGDEFEGFDD (108 aa)) form a disordered region. The stretch at 572-623 (KHEHEDVKAARREKKRRKREAQRLGDMTEPEREEQRKLDEMIAEVRRRNAEA) forms a coiled coil. Basic residues predominate over residues 582 to 591 (RREKKRRKRE). Over residues 600-621 (EPEREEQRKLDEMIAEVRRRNA) the composition is skewed to basic and acidic residues. The segment covering 622-631 (EAPTPAAQAA) has biased composition (low complexity).

The protein belongs to the DEAD box helicase family. DDX55/SPB4 subfamily. Component of pre-60S ribosomal complexes.

It is found in the nucleus. The protein localises to the nucleolus. It catalyses the reaction ATP + H2O = ADP + phosphate + H(+). Its function is as follows. ATP-binding RNA helicase involved in the biogenesis of 60S ribosomal subunits. Binds 90S pre-ribosomal particles and dissociates from pre-60S ribosomal particles after processing of 27SB pre-rRNA. Required for the normal formation of 18S rRNA through the processing of pre-rRNAs at sites A0, A1 and A2, and the normal formation of 25S and 5.8S rRNAs through the processing of pre-rRNAs at sites C1 and C2. The chain is ATP-dependent rRNA helicase SPB4 from Chaetomium globosum (strain ATCC 6205 / CBS 148.51 / DSM 1962 / NBRC 6347 / NRRL 1970) (Soil fungus).